The sequence spans 481 residues: 1-acylglycerol-3-phosphate O-acyltransferase PNPLA3 (481 aa).

Residues 1-41 (MYDAERGWSLSFAGCGFLGFYHVGATRCLSEHAPHLLRDAR) are Cytoplasmic-facing. Residues 10-179 (LSFAGCGFLG…SDNVPFIDAK (170 aa)) form the PNPLA domain. Residues 14–19 (GCGFLG) carry the GXGXXG motif. The helical; Signal-anchor for type II membrane protein transmembrane segment at 42-62 (MLFGASAGALHCVGVLSGIPL) threads the bilayer. Positions 45–49 (GASAG) match the GXSXG motif. S47 acts as the Nucleophile in catalysis. The Lumenal segment spans residues 63–481 (EQTLQVLSDL…FPSFSLEKSL (419 aa)). Residue N89 is glycosylated (N-linked (GlcNAc...) asparagine). Residue D166 is the Proton acceptor of the active site. A DGA/G motif is present at residues 166–168 (DGG). The N-linked (GlcNAc...) asparagine glycan is linked to N280.

It localises to the membrane. Its subcellular location is the lipid droplet. The enzyme catalyses a 1-acyl-sn-glycero-3-phosphate + an acyl-CoA = a 1,2-diacyl-sn-glycero-3-phosphate + CoA. The catalysed reaction is a triacylglycerol + H2O = a diacylglycerol + a fatty acid + H(+). It carries out the reaction a 1-acylglycerol + a 1,3-diacylglycerol = a triacylglycerol + glycerol. It catalyses the reaction a 1-acylglycerol + a 1,2-diacylglycerol = a triacylglycerol + glycerol. The enzyme catalyses 2 a 1-acylglycerol = a 1,2-diacylglycerol + glycerol. The catalysed reaction is 1-(9Z-octadecenoyl)-sn-glycero-3-phosphate + (9Z)-octadecenoyl-CoA = 1,2-di-(9Z-octadecenoyl)-sn-glycero-3-phosphate + CoA. It carries out the reaction 1-(9Z-octadecenoyl)-sn-glycero-3-phosphate + hexadecanoyl-CoA = 1-(9Z)-octadecenoyl-2-hexadecanoyl-sn-glycero-3-phosphate + CoA. It catalyses the reaction 1-(9Z-octadecenoyl)-sn-glycero-3-phosphate + (9Z,12Z)-octadecadienoyl-CoA = 1-(9Z)-octadecenoyl-2-(9Z,12Z)-octadecadienoyl-sn-glycero-3-phosphate + CoA. The enzyme catalyses 1-(9Z-octadecenoyl)-sn-glycero-3-phosphate + (5Z,8Z,11Z,14Z)-eicosatetraenoyl-CoA = 1-(9Z)-octadecenoyl-2-(5Z,8Z,11Z,14Z)-eicosatetraenoyl-sn-glycero-3-phosphate + CoA. The catalysed reaction is 2 1-(9Z-octadecenoyl)-glycerol = 1,2-di-(9Z-octadecenoyl)-glycerol + glycerol. It carries out the reaction 1-(9Z-octadecenoyl)-glycerol + 1,2-di-(9Z-octadecenoyl)-glycerol = 1,2,3-tri-(9Z-octadecenoyl)-glycerol + glycerol. It catalyses the reaction 1-(9Z-octadecenoyl)-glycerol + 1,3-di-(9Z-octadecenoyl)-glycerol = 1,2,3-tri-(9Z-octadecenoyl)-glycerol + glycerol. The enzyme catalyses 1,2,3-tri-(9Z-octadecenoyl)-glycerol + H2O = 1,3-di-(9Z-octadecenoyl)-glycerol + (9Z)-octadecenoate + H(+). The catalysed reaction is a 1,2-diacyl-sn-glycero-3-phosphocholine + H2O = a 1-acyl-sn-glycero-3-phosphocholine + a fatty acid + H(+). It participates in phospholipid metabolism. The protein operates within glycerolipid metabolism. With respect to regulation, the triglyceride lipase activity is inhibited by BEL ((E)-6-(bromomethylene)-3-(1-naphthalenyl)-2H-tetrahydropyran-2-one), a suicide substrate inhibitor. Specifically catalyzes coenzyme A (CoA)-dependent acylation of 1-acyl-sn-glycerol 3-phosphate (2-lysophosphatidic acid/LPA) to generate phosphatidic acid (PA), an important metabolic intermediate and precursor for both triglycerides and glycerophospholipids. Does not esterify other lysophospholipids. Acyl donors are long chain (at least C16) fatty acyl-CoAs: arachidonoyl-CoA, linoleoyl-CoA, oleoyl-CoA and at a lesser extent palmitoyl-CoA. Additionally possesses low triacylglycerol lipase and CoA-independent acylglycerol transacylase activities and thus may play a role in acyl-chain remodeling of triglycerides. In vitro may express hydrolytic activity against glycerolipids triacylglycerol, diacylglycerol and monoacylglycerol, with a strong preference for oleic acid as the acyl moiety. However, the triacylglycerol hydrolase activity is controversial and may be very low. Possesses phospholipase A2 activity. The chain is 1-acylglycerol-3-phosphate O-acyltransferase PNPLA3 from Homo sapiens (Human).